The chain runs to 303 residues: tRNA dimethylallyltransferase (303 aa).

Position 12 to 19 (12 to 19) interacts with ATP; the sequence is GTTASGKS. Substrate is bound at residue 14 to 19; sequence TASGKS. The interval 37-40 is interaction with substrate tRNA; that stretch reads DSRQ.

Belongs to the IPP transferase family. In terms of assembly, monomer. Mg(2+) is required as a cofactor.

It catalyses the reaction adenosine(37) in tRNA + dimethylallyl diphosphate = N(6)-dimethylallyladenosine(37) in tRNA + diphosphate. Its function is as follows. Catalyzes the transfer of a dimethylallyl group onto the adenine at position 37 in tRNAs that read codons beginning with uridine, leading to the formation of N6-(dimethylallyl)adenosine (i(6)A). The sequence is that of tRNA dimethylallyltransferase from Synechocystis sp. (strain ATCC 27184 / PCC 6803 / Kazusa).